Consider the following 156-residue polypeptide: Endoribonuclease YbeY (156 aa).

The Zn(2+) site is built by His-115, His-119, and His-125.

Belongs to the endoribonuclease YbeY family. Requires Zn(2+) as cofactor.

Its subcellular location is the cytoplasm. Functionally, single strand-specific metallo-endoribonuclease involved in late-stage 70S ribosome quality control and in maturation of the 3' terminus of the 16S rRNA. In Mannheimia succiniciproducens (strain KCTC 0769BP / MBEL55E), this protein is Endoribonuclease YbeY.